The sequence spans 426 residues: UDP-N-acetylglucosamine 1-carboxyvinyltransferase (426 aa).

Phosphoenolpyruvate is bound at residue 22 to 23 (KN). A UDP-N-acetyl-alpha-D-glucosamine-binding site is contributed by R99. C123 serves as the catalytic Proton donor. A 2-(S-cysteinyl)pyruvic acid O-phosphothioketal modification is found at C123. UDP-N-acetyl-alpha-D-glucosamine contacts are provided by residues 128–132 (RPIDL), D313, and I335.

The protein belongs to the EPSP synthase family. MurA subfamily.

The protein localises to the cytoplasm. It catalyses the reaction phosphoenolpyruvate + UDP-N-acetyl-alpha-D-glucosamine = UDP-N-acetyl-3-O-(1-carboxyvinyl)-alpha-D-glucosamine + phosphate. It participates in cell wall biogenesis; peptidoglycan biosynthesis. Cell wall formation. Adds enolpyruvyl to UDP-N-acetylglucosamine. This is UDP-N-acetylglucosamine 1-carboxyvinyltransferase from Zymomonas mobilis subsp. mobilis (strain ATCC 31821 / ZM4 / CP4).